Reading from the N-terminus, the 306-residue chain is Nucleotide-binding protein MUL_1815 (306 aa).

29–36 contributes to the ATP binding site; that stretch reads GLSGAGRG. 80–83 serves as a coordination point for GTP; that stretch reads DVRS.

The protein belongs to the RapZ-like family.

In terms of biological role, displays ATPase and GTPase activities. The chain is Nucleotide-binding protein MUL_1815 from Mycobacterium ulcerans (strain Agy99).